A 396-amino-acid chain; its full sequence is Ribosomal RNA large subunit methyltransferase I (396 aa).

The PUA domain maps to 2–81 (SVRLVLAKGR…ESIDIAFFSR (80 aa)).

This sequence belongs to the methyltransferase superfamily. RlmI family.

Its subcellular location is the cytoplasm. The enzyme catalyses cytidine(1962) in 23S rRNA + S-adenosyl-L-methionine = 5-methylcytidine(1962) in 23S rRNA + S-adenosyl-L-homocysteine + H(+). In terms of biological role, specifically methylates the cytosine at position 1962 (m5C1962) of 23S rRNA. The sequence is that of Ribosomal RNA large subunit methyltransferase I from Shigella boydii serotype 4 (strain Sb227).